The sequence spans 42 residues: Photosystem I reaction center subunit IX (42 aa).

Residues 7-27 (YLSVAPVLSTLWFGILAGLLI) traverse the membrane as a helical segment.

Belongs to the PsaJ family.

Its subcellular location is the plastid. The protein resides in the chloroplast thylakoid membrane. Functionally, may help in the organization of the PsaE and PsaF subunits. This Lemna minor (Common duckweed) protein is Photosystem I reaction center subunit IX.